We begin with the raw amino-acid sequence, 554 residues long: Carboxylesterase 1C (554 aa).

An N-terminal signal peptide occupies residues 1 to 18 (MWLHALVWASLAVCPILG). Residue Asn-79 is glycosylated (N-linked (GlcNAc...) asparagine). Cys-87 and Cys-116 form a disulfide bridge. The active-site Acyl-ester intermediate is the Ser-221. Cysteines 273 and 284 form a disulfide. N-linked (GlcNAc...) asparagine glycosylation is found at Asn-274 and Asn-304. The active-site Charge relay system is the Glu-342. Asn-377 carries an N-linked (GlcNAc...) asparagine glycan. His-455 serves as the catalytic Charge relay system. At Ser-473 the chain carries Phosphoserine. Asn-478 carries an N-linked (GlcNAc...) asparagine glycan. Residues 551-554 (TEHK) carry the Prevents secretion from ER motif.

The protein belongs to the type-B carboxylesterase/lipase family. As to expression, expressed in lung, kidney and liver.

It is found in the endoplasmic reticulum lumen. It catalyses the reaction a carboxylic ester + H2O = an alcohol + a carboxylate + H(+). Involved in the detoxification of xenobiotics and in the activation of ester and amide prodrugs. Involved in the extracellular metabolism of lung surfactant. The sequence is that of Carboxylesterase 1C (Ces1c) from Mus musculus (Mouse).